Consider the following 95-residue polypeptide: Putative defensin-like protein 252 (95 aa).

An N-terminal signal peptide occupies residues 1–27; sequence MRCVTSFVVLCILMFLVVNNVKVDVKA. Disulfide bonds link cysteine 34–cysteine 93, cysteine 45–cysteine 72, cysteine 56–cysteine 85, and cysteine 70–cysteine 87.

Belongs to the DEFL family.

The protein resides in the secreted. This Arabidopsis thaliana (Mouse-ear cress) protein is Putative defensin-like protein 252 (SCRL13).